A 130-amino-acid polypeptide reads, in one-letter code: ATP synthase epsilon chain, chloroplastic (130 aa).

Belongs to the ATPase epsilon chain family. In terms of assembly, F-type ATPases have 2 components, CF(1) - the catalytic core - and CF(0) - the membrane proton channel. CF(1) has five subunits: alpha(3), beta(3), gamma(1), delta(1), epsilon(1). CF(0) has three main subunits: a, b and c.

The protein localises to the plastid. The protein resides in the chloroplast thylakoid membrane. In terms of biological role, produces ATP from ADP in the presence of a proton gradient across the membrane. The protein is ATP synthase epsilon chain, chloroplastic of Tupiella akineta (Green alga).